Here is a 272-residue protein sequence, read N- to C-terminus: MNETDMKLVVVGAAGRMGQTLIRIIHETAGVRLHAAIERTGSPFIGRDAGELAGAGPMGVAVTDKPLEAFVEAEGVLDFTAPAATVEFAGLAAQARIVHVVGTTGCSADDEARIRAAARHARVIKSGNMSLGVNLLGVLTEKAARALPAGGWDIEILEMHHKHKVDAPSGTALLLGEAAARGRGIDLADHSVRVRDGHTGARPEGSIGFATLRGGSVIGEHSVVIAGEGEMVTLSHSATDRSIFARGAVAAALWGRSRKPGFYSMLDVLGLD.

NAD(+)-binding positions include 12–17 (GAAGRM) and glutamate 38. Arginine 39 lines the NADP(+) pocket. Residues 102 to 104 (GTT) and 126 to 129 (SGNM) each bind NAD(+). Histidine 160 (proton donor/acceptor) is an active-site residue. (S)-2,3,4,5-tetrahydrodipicolinate is bound at residue histidine 161. The Proton donor role is filled by lysine 164. 170 to 171 (GT) is a (S)-2,3,4,5-tetrahydrodipicolinate binding site.

This sequence belongs to the DapB family.

Its subcellular location is the cytoplasm. It catalyses the reaction (S)-2,3,4,5-tetrahydrodipicolinate + NAD(+) + H2O = (2S,4S)-4-hydroxy-2,3,4,5-tetrahydrodipicolinate + NADH + H(+). It carries out the reaction (S)-2,3,4,5-tetrahydrodipicolinate + NADP(+) + H2O = (2S,4S)-4-hydroxy-2,3,4,5-tetrahydrodipicolinate + NADPH + H(+). The protein operates within amino-acid biosynthesis; L-lysine biosynthesis via DAP pathway; (S)-tetrahydrodipicolinate from L-aspartate: step 4/4. Catalyzes the conversion of 4-hydroxy-tetrahydrodipicolinate (HTPA) to tetrahydrodipicolinate. The chain is 4-hydroxy-tetrahydrodipicolinate reductase from Rhizobium meliloti (strain 1021) (Ensifer meliloti).